Reading from the N-terminus, the 123-residue chain is Phosphoribosyl-AMP cyclohydrolase (123 aa).

Mg(2+) is bound at residue Asp73. Cys74 serves as a coordination point for Zn(2+). Asp75 and Asp77 together coordinate Mg(2+). Positions 90 and 97 each coordinate Zn(2+).

Belongs to the PRA-CH family. Homodimer. Mg(2+) serves as cofactor. Zn(2+) is required as a cofactor.

Its subcellular location is the cytoplasm. The enzyme catalyses 1-(5-phospho-beta-D-ribosyl)-5'-AMP + H2O = 1-(5-phospho-beta-D-ribosyl)-5-[(5-phospho-beta-D-ribosylamino)methylideneamino]imidazole-4-carboxamide. It participates in amino-acid biosynthesis; L-histidine biosynthesis; L-histidine from 5-phospho-alpha-D-ribose 1-diphosphate: step 3/9. In terms of biological role, catalyzes the hydrolysis of the adenine ring of phosphoribosyl-AMP. This is Phosphoribosyl-AMP cyclohydrolase from Methanoregula boonei (strain DSM 21154 / JCM 14090 / 6A8).